A 275-amino-acid chain; its full sequence is Thymidylate synthase (275 aa).

DUMP is bound at residue 138-139 (RR). Catalysis depends on cysteine 158, which acts as the Nucleophile. Residues 178–181 (RSCD), asparagine 189, and 219–221 (HIY) contribute to the dUMP site. Aspartate 181 provides a ligand contact to (6R)-5,10-methylene-5,6,7,8-tetrahydrofolate. Alanine 274 contributes to the (6R)-5,10-methylene-5,6,7,8-tetrahydrofolate binding site.

It belongs to the thymidylate synthase family. Bacterial-type ThyA subfamily. In terms of assembly, homodimer.

It localises to the cytoplasm. The catalysed reaction is dUMP + (6R)-5,10-methylene-5,6,7,8-tetrahydrofolate = 7,8-dihydrofolate + dTMP. It participates in pyrimidine metabolism; dTTP biosynthesis. In terms of biological role, catalyzes the reductive methylation of 2'-deoxyuridine-5'-monophosphate (dUMP) to 2'-deoxythymidine-5'-monophosphate (dTMP) while utilizing 5,10-methylenetetrahydrofolate (mTHF) as the methyl donor and reductant in the reaction, yielding dihydrofolate (DHF) as a by-product. This enzymatic reaction provides an intracellular de novo source of dTMP, an essential precursor for DNA biosynthesis. The polypeptide is Thymidylate synthase (Fusobacterium nucleatum subsp. nucleatum (strain ATCC 25586 / DSM 15643 / BCRC 10681 / CIP 101130 / JCM 8532 / KCTC 2640 / LMG 13131 / VPI 4355)).